Here is a 1024-residue protein sequence, read N- to C-terminus: Probable serine/threonine-protein kinase DDB_G0271682 (1024 aa).

Positions 187–261 are disordered; that stretch reads NIDNNNNNNN…RDNENNHNHQ (75 aa). The segment covering 190–244 has biased composition (low complexity); that stretch reads NNNNNNNNNNNNNNNNNNNNNNNNNNNNNNNNNNNNNNNNNNNNNNNNNNNNNNN. A compositionally biased stretch (basic and acidic residues) spans 250 to 261; it reads RSRDNENNHNHQ. Protein kinase domains lie at 360-609 and 645-1018; these read LLFI…LKLM and ILVT…ELLI. ATP-binding positions include 366–374 and Lys-387; that span reads IGSGACGEV. The active-site Proton acceptor is Asp-484. ATP-binding positions include 651 to 659 and Lys-719; that span reads VGGNVSGNV. 2 stretches are compositionally biased toward low complexity: residues 823–851 and 862–874; these read NNNSNQNNNNNNNNNNNNNNNNNNNNNNN and ENTNTTTTTTTTT. Residues 823 to 874 form a disordered region; it reads NNNSNQNNNNNNNNNNNNNNNNNNNNNNNKKNDGGDDNGENTNTTTTTTTTT.

The protein belongs to the protein kinase superfamily. TKL Ser/Thr protein kinase family.

The catalysed reaction is L-seryl-[protein] + ATP = O-phospho-L-seryl-[protein] + ADP + H(+). The enzyme catalyses L-threonyl-[protein] + ATP = O-phospho-L-threonyl-[protein] + ADP + H(+). The chain is Probable serine/threonine-protein kinase DDB_G0271682 from Dictyostelium discoideum (Social amoeba).